A 147-amino-acid polypeptide reads, in one-letter code: Leghemoglobin-1 (147 aa).

Positions 2–147 constitute a Globin domain; sequence SFTDKQEALV…LATAIKKAMS (146 aa). Nitrated tyrosine occurs at positions 25 and 30. S45 contacts heme b. S45 bears the Phosphoserine mark. H62 serves as a coordination point for O2. Positions 65, 94, and 97 each coordinate heme b. Nitrated tyrosine is present on Y135.

This sequence belongs to the plant globin family. Monomer. Nitrated in effective nodules and particularly in hypoxic conditions; this mechanism may play a protective role in the symbiosis by buffering toxic peroxynitrite NO(2)(-). Nitration level decrease during nodule senescence. Post-translationally, phosphorylation at Ser-45 disrupts the molecular environment of its porphyrin ring oxygen binding pocket, thus leading to a reduced oxygen consumption and to the delivery of oxygen O(2) to symbiosomes. Root nodules.

Its subcellular location is the cytoplasm. It is found in the cytosol. The protein localises to the nucleus. Leghemoglobin that reversibly binds oxygen O(2) through a pentacoordinated heme iron. In root nodules, facilitates the diffusion of oxygen to the bacteroids while preventing the bacterial nitrogenase from being inactivated by buffering dioxygen, nitric oxide and carbon monoxide, and promoting the formation of reactive oxygen species (ROS, e.g. H(2)O(2)). This role is essential for symbiotic nitrogen fixation (SNF). The protein is Leghemoglobin-1 of Medicago sativa (Alfalfa).